Consider the following 459-residue polypeptide: MDQSNRYARLDLKEADLIAGGRHVLCAYVMKPKAGYGYLETAAHFAAESSTGTNVEVSTTDDFTRGVDALVYEIDPEKEIMKIAYPVELFDRNIIDGRAMLCSFLTLTIGNNQGMGDVEYAKMHDFYVPPCYLRLFDGPSMNIADMWRVLGRDVRNGGMVVGTIIKPKLGLRPKPFADACHEFWLGGDFIKNDEPQGNQTFAPLKETIRLVADAMKRAQDETGEAKLFSANITADDHYEMVARGEYILETFGENADHVAFLVDGYVTGPAAITTARRQFPRQFLHYHRAGHGAVTSPQSMRGYTAFVLSKMARLQGASGIHTGTMGYGKMEGEAADKIMAYMLTDEAAEGPFYRQDWLGLKATTPIISGGMNALRLPGFFDNLGHSNVIQTSGGGAFGHLDGGTAGAKSLRQSHEAWMAGVDLVTYAREHRELARAFESFPADADKFYPGWRDRLQRAA.

Residue Asn-111 coordinates substrate. Lys-166 (proton acceptor) is an active-site residue. Lys-168 is a substrate binding site. Mg(2+) contacts are provided by Lys-191, Asp-193, and Glu-194. Lys-191 bears the N6-carboxylysine mark. His-287 acts as the Proton acceptor in catalysis. Positions 288, 321, and 368 each coordinate substrate.

Belongs to the RuBisCO large chain family. Type II subfamily. Homodimer. Requires Mg(2+) as cofactor.

The enzyme catalyses 2 (2R)-3-phosphoglycerate + 2 H(+) = D-ribulose 1,5-bisphosphate + CO2 + H2O. The catalysed reaction is D-ribulose 1,5-bisphosphate + O2 = 2-phosphoglycolate + (2R)-3-phosphoglycerate + 2 H(+). Its function is as follows. RuBisCO catalyzes two reactions: the carboxylation of D-ribulose 1,5-bisphosphate, the primary event in carbon dioxide fixation, as well as the oxidative fragmentation of the pentose substrate. Both reactions occur simultaneously and in competition at the same active site. This is Ribulose bisphosphate carboxylase from Cereibacter sphaeroides (strain ATCC 17029 / ATH 2.4.9) (Rhodobacter sphaeroides).